Consider the following 610-residue polypeptide: MANSGLWELITIGSAVRNVAKSYLKAEASSITAKQLYDASKITSSKRSTSDLHVQLLEKYRNGKVKHASQIKELGLSSKDTKRTLLGNSLDVQKDASGVKHLQEQSSKEIKNPISQPILPNKKDEISPAKPSAIDSSIKDVTKSHPATNANFTADFESSIEESYSTENKSPVILSSSKVPSSQWSRLWHYGGLATSLSVGAIGEKMKRMWGISKDDGALLLNERNVEILVNKLTQMRGAALKMGQMLSFQDSKLIDPRVSQILERVRDGAHSMPEKQLEQVMVKNLGKNWMTHYSEFDRKPMAAASIGQVHRARLASNHMEVVVKVQYPGVMSSIDSDLNNLAYLLKASRILPKGLFLENSLAAARKELKWECDYEREAAFAERFGSLLKNDSDFKVPMVFREASGPSVITLEYLHGIALGKQKYSQATRNHIGYLLTKQCLREISEYHFMQTDPNWSNFLYNGKTKKIELLDFGASIEYDEKFIKKYCRLLLAAAHRNREKCKKLSVELGYLNNHESAQMIDAHINSIFTLAEPFAFDAPDVYDFGDQTITARVKQQIPVMLDLRLQPPPEETYSLHRRLSGHFLLCAKLGAKVRCKELFSGMLKHYAD.

Residues 98–111 show a composition bias toward basic and acidic residues; sequence GVKHLQEQSSKEIK. Positions 98 to 144 are disordered; it reads GVKHLQEQSSKEIKNPISQPILPNKKDEISPAKPSAIDSSIKDVTKS.

This sequence belongs to the protein kinase superfamily. ADCK protein kinase family.

The protein localises to the mitochondrion. The protein operates within cofactor biosynthesis; ubiquinone biosynthesis. Atypical kinase involved in the biosynthesis of coenzyme Q, also named ubiquinone, an essential lipid-soluble electron transporter for aerobic cellular respiration. Its substrate specificity is still unclear: may act as a protein kinase that mediates phosphorylation of coq3. According to other reports, acts as a small molecule kinase, possibly a lipid kinase that phosphorylates a prenyl lipid in the ubiquinone biosynthesis pathway, as suggested by its ability to bind coenzyme Q lipid intermediates. The protein is Atypical kinase COQ8, mitochondrial of Schizosaccharomyces pombe (strain 972 / ATCC 24843) (Fission yeast).